Consider the following 268-residue polypeptide: Nickel import ATP-binding protein NikE (268 aa).

The region spanning 4 to 252 (LNVSGLSHHY…SSDAGRVLQN (249 aa)) is the ABC transporter domain. 45–52 (GRSGCGKS) serves as a coordination point for ATP.

Belongs to the ABC transporter superfamily. Nickel importer (TC 3.A.1.5.3) family. As to quaternary structure, the complex is composed of two ATP-binding proteins (NikD and NikE), two transmembrane proteins (NikB and NikC) and a solute-binding protein (NikA).

It localises to the cell inner membrane. The enzyme catalyses Ni(2+)(out) + ATP + H2O = Ni(2+)(in) + ADP + phosphate + H(+). Its function is as follows. Part of the ABC transporter complex NikABCDE involved in nickel import. Responsible for energy coupling to the transport system. The protein is Nickel import ATP-binding protein NikE of Shigella sonnei (strain Ss046).